A 1349-amino-acid chain; its full sequence is Protein turtle homolog B (1349 aa).

Residues 1 to 20 form the signal peptide; the sequence is MIWYVATFIASVIGTRGLAA. Residues 21–722 are Extracellular-facing; it reads EGAHGLREEP…DLTEDGLARP (702 aa). Ig-like domains follow at residues 24 to 129, 139 to 226, 228 to 320, 324 to 415, and 420 to 504; these read HGLR…HNGS, PTFT…LLVQ, PPFI…AYLT, PARV…ARLV, and PYFT…THLT. 2 disulfides stabilise this stretch: cysteine 45/cysteine 113 and cysteine 161/cysteine 208. 2 N-linked (GlcNAc...) asparagine glycosylation sites follow: asparagine 241 and asparagine 258. 3 cysteine pairs are disulfide-bonded: cysteine 250-cysteine 303, cysteine 346-cysteine 397, and cysteine 442-cysteine 488. 2 Fibronectin type-III domains span residues 512-604 and 614-708; these read APGS…TLAF and LVTP…STDI. Residue asparagine 624 is glycosylated (N-linked (GlcNAc...) asparagine). The helical transmembrane segment at 723–743 threads the bilayer; that stretch reads VLAGIVATICFLAAAILFSTL. Topologically, residues 744 to 1349 are cytoplasmic; that stretch reads AACFVNKQRK…SPPERALSKL (606 aa). Disordered stretches follow at residues 758 to 817, 911 to 1081, and 1099 to 1349; these read RKKD…EKEL, QLTP…RGLP, and APKG…LSKL. Phosphoserine occurs at positions 775, 783, and 794. Residues 911-921 show a composition bias toward polar residues; sequence QLTPLSSSQES. Positions 985–998 are enriched in low complexity; that stretch reads VPEVGSPLSSVMSS. 3 stretches are compositionally biased toward polar residues: residues 1018 to 1033, 1129 to 1141, and 1199 to 1214; these read ENAS…TPTG, LVSQ…TSQG, and SRLS…SRTG. Arginine 1136 carries the post-translational modification Omega-N-methylarginine. Phosphoserine occurs at positions 1207 and 1215. Over residues 1251-1271 the composition is skewed to low complexity; that stretch reads STPSTGSPSQSSRSGSPSYRP. Over residues 1283-1292 the composition is skewed to pro residues; that stretch reads PSPPPGPAPA.

It belongs to the immunoglobulin superfamily. Turtle family. In terms of assembly, found in a complex with MAGI2 and NLGN2, where it interacts with MAGI2 (via PDZ 5 and PDZ 6 domains). In terms of processing, N-glycosylated and sialylated. Not significantly O-glycosylated.

The protein localises to the postsynaptic cell membrane. Its subcellular location is the postsynaptic density. Transmembrane protein which is abundantly expressed in interneurons, where it may regulate inhibitory synapse development. May mediate homophilic cell adhesion. The chain is Protein turtle homolog B (IGSF9B) from Homo sapiens (Human).